Here is a 463-residue protein sequence, read N- to C-terminus: Homoserine O-acetyltransferase FUB5 (463 aa).

The region spanning 113-436 is the AB hydrolase-1 domain; the sequence is NVMIICHALS…VSDDGHDAFL (324 aa). The active-site Nucleophile is the serine 211. A compositionally biased stretch (basic and acidic residues) spans 296 to 312; sequence RFGRDTGSKKKTQKQES. Positions 296–331 are disordered; the sequence is RFGRDTGSKKKTQKQESKTLPSNSTPIHSHSGADET. Residues aspartate 403 and histidine 432 contribute to the active site.

The protein belongs to the AB hydrolase superfamily. MetX family.

It carries out the reaction L-homoserine + acetyl-CoA = O-acetyl-L-homoserine + CoA. The protein operates within mycotoxin biosynthesis. Its function is as follows. Homoserine O-acetyltransferase; part of the gene cluster that mediates the biosynthesis of fusaric acid, a mycotoxin with low to moderate toxicity to animals and humans, but with high phytotoxic properties. L-aspartate is suggested as fusaric acid amino acid precursor that is activated and further processed to O-acetyl-L-homoserine by cluster enzymes aspartate kinase FUB3 and homoserine O-acetyltransferase FUB5, as well as enzymes of the primary metabolism. The polyketide synthase (PKS) FUB1 generates the triketide trans-2-hexenal which is presumptively released by the hydrolase FUB4 and linked to the NRPS-bound amino acid precursor by NAD(P)-dependent dehydrogenase FUB6. FUB1, FUB4, and the non-canonical NRPS Fub8 may form an enzyme complex. Further processing of the NRPS-bound intermediate might be carried out by FUB6 and the sulfhydrylase FUB7, enabling a spontaneous electrocyclization to close the carbon backbone of fusaric acid. Dihydrofusaric acid is likely to be released via reduction by the thioester reductase (TR) domain of FUB8 whereupon the final oxidation to fusaric acid may (also) be performed by the FMN-dependent dehydrogenase FUB9. The chain is Homoserine O-acetyltransferase FUB5 from Gibberella moniliformis (strain M3125 / FGSC 7600) (Maize ear and stalk rot fungus).